The chain runs to 67 residues: Large ribosomal subunit protein uL29 (67 aa).

Belongs to the universal ribosomal protein uL29 family.

The polypeptide is Large ribosomal subunit protein uL29 (Exiguobacterium sibiricum (strain DSM 17290 / CCUG 55495 / CIP 109462 / JCM 13490 / 255-15)).